Here is a 211-residue protein sequence, read N- to C-terminus: MAFKDAINKMVSYFDTDEVNEVEEEVTAAKMEEPVVQEPKQRPIPSQQTSRQSQNPAMNRPTVARSQQTESDSLPTYPNRQESIDRRSSGRESVTASTARRETYQAQTTVQEGKTTIALKYPKKYEDAQEIVDLLIGNECVLIDFQFMLDAQARRCLDFIDGASKVLYGTLQKVGSSMYLLTPSNVSVNIEDMNIPNHNQDFGYDFDMKRR.

A compositionally biased stretch (acidic residues) spans 15–26 (DTDEVNEVEEEV). The segment at 15 to 111 (DTDEVNEVEE…ETYQAQTTVQ (97 aa)) is disordered. Polar residues-rich tracts occupy residues 44–57 (IPSQQTSRQSQNPA), 64–81 (ARSQQTESDSLPTYPNRQ), and 91–111 (RESVTASTARRETYQAQTTVQ).

The protein belongs to the SepF family. Homodimer. Interacts with FtsZ.

The protein localises to the cytoplasm. Its function is as follows. Cell division protein that is part of the divisome complex and is recruited early to the Z-ring. Probably stimulates Z-ring formation, perhaps through the cross-linking of FtsZ protofilaments. Its function overlaps with FtsA. The protein is Cell division protein SepF of Streptococcus uberis (strain ATCC BAA-854 / 0140J).